A 329-amino-acid polypeptide reads, in one-letter code: Serpentine receptor class alpha-6 (329 aa).

7 helical membrane passes run 26–46, 68–88, 104–124, 143–163, 187–207, 238–258, and 273–293; these read VDLL…KIVI, LYQI…FFML, YFKV…GLLI, IGVC…FIIL, NLFS…SIFI, ICFL…GILI, and FWIA…VLLI.

It belongs to the nematode receptor-like protein sra family.

It localises to the membrane. The polypeptide is Serpentine receptor class alpha-6 (sra-6) (Caenorhabditis elegans).